The sequence spans 168 residues: CDP-archaeol synthase (168 aa).

A run of 5 helical transmembrane segments spans residues 7-27 (PLES…PVLL), 55-75 (GLAT…SATC), 80-100 (YAAG…GAFI), 109-129 (GAPA…LALY), and 130-150 (AAGY…VIAL).

The protein belongs to the CDP-archaeol synthase family. Mg(2+) serves as cofactor.

The protein resides in the cell membrane. It carries out the reaction 2,3-bis-O-(geranylgeranyl)-sn-glycerol 1-phosphate + CTP + H(+) = CDP-2,3-bis-O-(geranylgeranyl)-sn-glycerol + diphosphate. The protein operates within membrane lipid metabolism; glycerophospholipid metabolism. Catalyzes the formation of CDP-2,3-bis-(O-geranylgeranyl)-sn-glycerol (CDP-archaeol) from 2,3-bis-(O-geranylgeranyl)-sn-glycerol 1-phosphate (DGGGP) and CTP. This reaction is the third ether-bond-formation step in the biosynthesis of archaeal membrane lipids. In Hyperthermus butylicus (strain DSM 5456 / JCM 9403 / PLM1-5), this protein is CDP-archaeol synthase.